Consider the following 223-residue polypeptide: MSTFAILPVKRFEGAKGRLAGGLAAGPRRALAEAMYVDVLTALRRTQGVDRVLVLTADPGAQRVAEGYDAIPLDDPAEAGQNRAVMRGVAHARELGATRVLCLSGDTPMLDPADLDALLGRPRTADRYVVIVPDRHGEGTNGLLLCPPDGMKPSYGVDSCARHKALAEEAGLAVEIAEIPSVALDVDTPDDLDALRELIASRRGGAAHTRGMLNQLLRTNPKN.

Residues Thr-140, Gly-156, and Ser-159 each coordinate phosphoenolpyruvate.

This sequence belongs to the CofC family.

It catalyses the reaction phosphoenolpyruvate + GTP + H(+) = enolpyruvoyl-2-diphospho-5'-guanosine + diphosphate. The protein operates within cofactor biosynthesis; coenzyme F420 biosynthesis. Its function is as follows. Guanylyltransferase that catalyzes the activation of phosphoenolpyruvate (PEP) as enolpyruvoyl-2-diphospho-5'-guanosine, via the condensation of PEP with GTP. It is involved in the biosynthesis of coenzyme F420, a hydride carrier cofactor. The sequence is that of Phosphoenolpyruvate guanylyltransferase from Conexibacter woesei (strain DSM 14684 / CCUG 47730 / CIP 108061 / JCM 11494 / NBRC 100937 / ID131577).